Here is a 1013-residue protein sequence, read N- to C-terminus: A-type ATP synthase subunit A (1013 aa).

A DOD-type homing endonuclease domain is found at 392–525; that stretch reads FLGYVIGDGT…LTYLLAKLGI (134 aa).

Belongs to the ATPase alpha/beta chains family. Has multiple subunits with at least A(3), B(3), C, D, E, F, H, I and proteolipid K(x). Post-translationally, this protein undergoes a protein self splicing that involves a post-translational excision of the VDE intervening region (intein) followed by peptide ligation.

The protein resides in the cell membrane. It catalyses the reaction ATP + H2O + 4 H(+)(in) = ADP + phosphate + 5 H(+)(out). Component of the A-type ATP synthase that produces ATP from ADP in the presence of a proton gradient across the membrane. The A chain is the catalytic subunit. The polypeptide is A-type ATP synthase subunit A (Pyrococcus furiosus (strain ATCC 43587 / DSM 3638 / JCM 8422 / Vc1)).